A 193-amino-acid polypeptide reads, in one-letter code: Dirigent protein 11 (193 aa).

The signal sequence occupies residues 1–33; that stretch reads MLQITNMATPFLLLLLPLIFSTVLLLTITVTQS. N-linked (GlcNAc...) asparagine glycosylation is found at N78 and N136.

The protein belongs to the plant dirigent protein family. As to quaternary structure, homodimer.

It localises to the secreted. It is found in the extracellular space. The protein resides in the apoplast. Its function is as follows. Dirigent proteins impart stereoselectivity on the phenoxy radical-coupling reaction, yielding optically active lignans from two molecules of coniferyl alcohol in the biosynthesis of lignans, flavonolignans, and alkaloids and thus plays a central role in plant secondary metabolism. The chain is Dirigent protein 11 (DIR11) from Arabidopsis thaliana (Mouse-ear cress).